The sequence spans 890 residues: Translation initiation factor IF-2 (890 aa).

Residues 45–304 (LIDHLNQKNS…LQQGFQKPAQ (260 aa)) are disordered. Positions 67 to 81 (STLNIPGTGGKSKSV) are enriched in polar residues. A compositionally biased stretch (basic and acidic residues) spans 92–217 (VKRDPQEAER…RMAEENKWTD (126 aa)). Residues 252 to 266 (GRGRNAKAARPKKGN) are compositionally biased toward basic residues. The span at 267–280 (KHAESKADREEARA) shows a compositional bias: basic and acidic residues. Residues 389–558 (PRAPVVTIMG…LLQAEVLELK (170 aa)) enclose the tr-type G domain. Positions 398–405 (GHVDHGKT) are G1. 398–405 (GHVDHGKT) serves as a coordination point for GTP. The G2 stretch occupies residues 423-427 (GITQH). The tract at residues 444-447 (DTPG) is G3. GTP-binding positions include 444–448 (DTPGH) and 498–501 (NKID). The segment at 498–501 (NKID) is G4. The interval 534 to 536 (SAK) is G5. Lys-808 bears the N6-acetyllysine mark.

This sequence belongs to the TRAFAC class translation factor GTPase superfamily. Classic translation factor GTPase family. IF-2 subfamily.

Its subcellular location is the cytoplasm. Functionally, one of the essential components for the initiation of protein synthesis. Protects formylmethionyl-tRNA from spontaneous hydrolysis and promotes its binding to the 30S ribosomal subunits. Also involved in the hydrolysis of GTP during the formation of the 70S ribosomal complex. The chain is Translation initiation factor IF-2 from Shigella sonnei (strain Ss046).